Consider the following 668-residue polypeptide: Myb-like protein W (668 aa).

6 disordered regions span residues 57–124 (LDQF…NESV), 246–357 (EKEK…EEEV), 403–432 (KPKS…TDKG), 497–546 (YTNT…NKER), 561–583 (SMGR…TTTS), and 631–668 (QCEE…DEII). The span at 69–121 (NNNNNNNSNNNNNNNNNNNNNNNNNNNNNNNNNNNNNNNNNNYNNYNNNNNNN) shows a compositional bias: low complexity. Positions 246-268 (EKEKRKKEREEREEREKQEKQEQ) are enriched in basic and acidic residues. Over residues 293–307 (NNKDNNHNGYYYYYD) the composition is skewed to low complexity. Acidic residues predominate over residues 308–318 (NDNDNYNDGDD). Residues 319–335 (EKEKEKEKEKEKEKENE) are compositionally biased toward basic and acidic residues. The Myb-like domain maps to 344-398 (TSMVNSEEWTEEEVNKMNEIRGKLSTADYNYWDKVSAHVKSKTAEQCQRKYNSRF). Over residues 501-542 (NNNNNNNNNNNNNNNNNNNNNNNNNNNNNNNNNNNNNNNNNN) the composition is skewed to low complexity. The span at 632-641 (CEERKKKEDR) shows a compositional bias: basic and acidic residues. The segment covering 642 to 651 (DVDEDGEDDY) has biased composition (acidic residues).

This chain is Myb-like protein W (mybW), found in Dictyostelium discoideum (Social amoeba).